Consider the following 62-residue polypeptide: Large ribosomal subunit protein eL37 (62 aa).

Positions 20, 23, 35, and 38 each coordinate Zn(2+). The segment at 20–38 adopts a C4-type zinc-finger fold; that stretch reads CRRCGRVSYNVKKGYCAAC.

Belongs to the eukaryotic ribosomal protein eL37 family. Part of the 50S ribosomal subunit. It depends on Zn(2+) as a cofactor.

Its function is as follows. Binds to the 23S rRNA. The sequence is that of Large ribosomal subunit protein eL37 from Pyrococcus furiosus (strain ATCC 43587 / DSM 3638 / JCM 8422 / Vc1).